Reading from the N-terminus, the 250-residue chain is MGGHSHWAGIKHKKALLDSKRGKVFTRIIREITIAAKMGGAELENNPRLRKAVEDAKAANMPADNIKRAIMKGTGQLEGATYEEITYEGYGPSSIAVIVDCTTDNKNRTFSEIRKIFTSRGGSIGTTGCVSYMFKKKGLIIINKETISEESLMDIAIEAGADDIKSESEVHEVFTAPESLDIVKKALEEKGVKTESATLTMIPDTETEITDENAAQSIMKMMDELDDHDDTKAVYSNYNIPDEIMEKISK.

This sequence belongs to the TACO1 family.

The protein localises to the cytoplasm. In Elusimicrobium minutum (strain Pei191), this protein is Probable transcriptional regulatory protein Emin_1151.